Reading from the N-terminus, the 258-residue chain is Imidazole glycerol phosphate synthase subunit HisF (258 aa).

Residues D11 and D130 contribute to the active site.

This sequence belongs to the HisA/HisF family. Heterodimer of HisH and HisF.

It localises to the cytoplasm. It catalyses the reaction 5-[(5-phospho-1-deoxy-D-ribulos-1-ylimino)methylamino]-1-(5-phospho-beta-D-ribosyl)imidazole-4-carboxamide + L-glutamine = D-erythro-1-(imidazol-4-yl)glycerol 3-phosphate + 5-amino-1-(5-phospho-beta-D-ribosyl)imidazole-4-carboxamide + L-glutamate + H(+). It functions in the pathway amino-acid biosynthesis; L-histidine biosynthesis; L-histidine from 5-phospho-alpha-D-ribose 1-diphosphate: step 5/9. In terms of biological role, IGPS catalyzes the conversion of PRFAR and glutamine to IGP, AICAR and glutamate. The HisF subunit catalyzes the cyclization activity that produces IGP and AICAR from PRFAR using the ammonia provided by the HisH subunit. This Blochmanniella floridana protein is Imidazole glycerol phosphate synthase subunit HisF.